The chain runs to 418 residues: Gamma-glutamyl phosphate reductase (418 aa).

The protein belongs to the gamma-glutamyl phosphate reductase family.

The protein localises to the cytoplasm. It catalyses the reaction L-glutamate 5-semialdehyde + phosphate + NADP(+) = L-glutamyl 5-phosphate + NADPH + H(+). It participates in amino-acid biosynthesis; L-proline biosynthesis; L-glutamate 5-semialdehyde from L-glutamate: step 2/2. Catalyzes the NADPH-dependent reduction of L-glutamate 5-phosphate into L-glutamate 5-semialdehyde and phosphate. The product spontaneously undergoes cyclization to form 1-pyrroline-5-carboxylate. This is Gamma-glutamyl phosphate reductase from Pelodictyon phaeoclathratiforme (strain DSM 5477 / BU-1).